The sequence spans 482 residues: Anaerobic nitric oxide reductase flavorubredoxin (482 aa).

The interval 30-210 (LRGSSYNSYL…PFSRLVTPKI (181 aa)) is zinc metallo-hydrolase. The Fe cation site is built by His-79, Glu-81, Asp-83, His-147, Asp-166, and His-227. Positions 254–393 (ITLFYDTMSN…ICRQHGREIA (140 aa)) constitute a Flavodoxin-like domain. Residues 260 to 264 (TMSNN) and 342 to 369 (AFGS…EMSM) contribute to the FMN site. The 52-residue stretch at 426–477 (GPCMQCSVCQWVYDPALGEPLQDVAPGTPWSDVPDNFLCPECSLGKDVFDVL) folds into the Rubredoxin-like domain. Fe cation contacts are provided by Cys-431, Cys-434, Cys-464, and Cys-467.

The protein in the N-terminal section; belongs to the zinc metallo-hydrolase group 3 family. As to quaternary structure, homotetramer. The cofactor is Fe cation. FMN serves as cofactor.

Its subcellular location is the cytoplasm. Its pathway is nitrogen metabolism; nitric oxide reduction. Anaerobic nitric oxide reductase; uses NADH to detoxify nitric oxide (NO), protecting several 4Fe-4S NO-sensitive enzymes. Has at least 2 reductase partners, only one of which (NorW, flavorubredoxin reductase) has been identified. NO probably binds to the di-iron center; electrons enter from the NorW at rubredoxin and are transferred sequentially to the FMN center and the di-iron center. Also able to function as an aerobic oxygen reductase. In Enterobacter sp. (strain 638), this protein is Anaerobic nitric oxide reductase flavorubredoxin.